The chain runs to 140 residues: Putative pre-16S rRNA nuclease (140 aa).

The protein belongs to the YqgF nuclease family.

The protein resides in the cytoplasm. Could be a nuclease involved in processing of the 5'-end of pre-16S rRNA. This Serratia proteamaculans (strain 568) protein is Putative pre-16S rRNA nuclease.